A 630-amino-acid chain; its full sequence is Adenine DNA glycosylase (630 aa).

Residues 54-72 (MRKCREKKEAEREAEREAE) show a composition bias toward basic and acidic residues. Positions 54–123 (MRKCREKKEA…ALGGDIEDLF (70 aa)) are disordered. Residues 73-123 (REAEEEEKAEEAEAEADKEEAEEESEEEEEEEEEEAEAEEEALGGDIEDLF) are compositionally biased toward acidic residues. The active-site Proton donor/acceptor is Glu168. [4Fe-4S] cluster-binding residues include Cys341, Cys348, Cys351, and Cys357. The Nudix hydrolase domain occupies 383–536 (PRHDFCCVCV…RKVPPFRLQH (154 aa)). Positions 427–451 (VILNEEADSATRRNAINVYLKEAFR) match the Nudix box motif.

It belongs to the Nth/MutY family. [4Fe-4S] cluster is required as a cofactor.

It localises to the nucleus. The catalysed reaction is Hydrolyzes free adenine bases from 7,8-dihydro-8-oxoguanine:adenine mismatched double-stranded DNA, leaving an apurinic site.. Its function is as follows. Involved in oxidative DNA damage repair. Initiates repair of A*oxoG to C*G by removing the inappropriately paired adenine base from the DNA backbone. Possesses both adenine and 2-OH-A DNA glycosylase activities. The chain is Adenine DNA glycosylase (MYH) from Arabidopsis thaliana (Mouse-ear cress).